Consider the following 427-residue polypeptide: MAADRNTGHTEEDKLDVLKSTQTVIHKALEKLGYPEEVYELLKEPMRLLTVKIPVRMDDGSVKIFTGYRAQHNDSVGPTKGGIRFHPNVTEKEVKAVKALSIWMSLKCGIIDLPYGGGKGGIVCDPRDMSFRELERLSRGYVRAISQIVGPTKDVPAPDVFTNSQIMAWMMDEYSRIDEFNSPGFITGKPLVLGGSHGRESATAKGVTICIKEAAKKRGIDIKGARVVVQGFGNAGSYLAKFMHDAGAKVVGISDAYGGLYDPEGLDIDYLLDRRDSFGTVTKLFNDTITNQELLELDCDILVPAAIENQITEENAHNIRAKIVVEAANGPTTLEGTKILSDRDILLVPDVLASAGGVTVSYFEWVQNNQGFYWSEEEVEEKLEKMMVKSFNNIYEMANNRRIDMRLAAYMVGVRKMAEASRFRGWI.

Residues lysine 80 and lysine 107 each contribute to the substrate site. Lysine 119 (proton donor) is an active-site residue. Residues threonine 203 and asparagine 234 each coordinate NAD(+). Serine 361 serves as a coordination point for substrate.

Belongs to the Glu/Leu/Phe/Val dehydrogenases family. As to quaternary structure, homohexamer.

The catalysed reaction is L-glutamate + NAD(+) + H2O = 2-oxoglutarate + NH4(+) + NADH + H(+). Its function is as follows. GudB seems to be intrinsically inactive, however spontaneous mutations removing a 9-bp direct repeat within the wild-type gudB sequence activated the GudB protein and allowed more-efficient utilization of amino acids of the glutamate family (called gutB1). This 3 amino acid insertion presumably causes severe destabilization of the fold of the protein, leading to an inactive enzyme that is very quickly degraded. The cryptic GudB serves as a buffer that may compensate for mutations in the rocG gene and that can also be decryptified for the utilization of glutamate as a single carbon source in the absence of arginine. It is unable to synthesize glutamate. This chain is Cryptic catabolic NAD-specific glutamate dehydrogenase GudB, found in Bacillus subtilis (strain 168).